The primary structure comprises 181 residues: Interleukin-24 (181 aa).

The first 26 residues, Met-1–Gly-26, serve as a signal peptide directing secretion. A disulfide bridge links Cys-34 with Cys-81. Residue Asn-74 is glycosylated (N-linked (GlcNAc...) asparagine). Residue Lys-97 forms a Glycyl lysine isopeptide (Lys-Gly) (interchain with G-Cter in ubiquitin) linkage.

This sequence belongs to the IL-10 family. Glycosylated. In terms of processing, ubiquitination at Lys-97 promotes proteasomal degradation. As to expression, selectively expressed by Th2 cells. Expressed in the liver.

The protein localises to the secreted. Multifunctional cytokine mainly produced by T-cells that plays a regulatory role in immune response, tissue homeostasis, host defense, and oncogenesis. Possesses antiviral functions and induces the type I interferon response during influenza infection. Signals through two receptor complexes IL20RA/IL20RB or IL20RB/IL22RA1. In turn, stimulates the JAK1-STAT3 and MAPK pathways and promotes the secretion of pro-inflammatory mediators including IL8 and MMP1. Intracellularly, maintains endoplasmic reticulum homeostasis by restricting the eIF2alpha-CHOP pathway-mediated stress signal. In addition, acts as a quality control mechanism for the ubiquitin proteasome system by alerting the cell to proteasome dysfunction through activation of PKR/EIF2AK2. In Mus musculus (Mouse), this protein is Interleukin-24 (Il24).